A 196-amino-acid polypeptide reads, in one-letter code: Probable nicotinate-nucleotide adenylyltransferase (196 aa).

It belongs to the NadD family.

The enzyme catalyses nicotinate beta-D-ribonucleotide + ATP + H(+) = deamido-NAD(+) + diphosphate. It functions in the pathway cofactor biosynthesis; NAD(+) biosynthesis; deamido-NAD(+) from nicotinate D-ribonucleotide: step 1/1. Its function is as follows. Catalyzes the reversible adenylation of nicotinate mononucleotide (NaMN) to nicotinic acid adenine dinucleotide (NaAD). This chain is Probable nicotinate-nucleotide adenylyltransferase, found in Thermotoga sp. (strain RQ2).